We begin with the raw amino-acid sequence, 478 residues long: NADH-quinone oxidoreductase subunit N (478 aa).

A run of 13 helical transmembrane segments spans residues 8 to 28 (LVLP…FGVW), 38 to 58 (ILWA…LGTG), 62 to 82 (AFGG…VILV), 106 to 126 (PILI…GDLM), 160 to 180 (FVLG…VYGF), 200 to 220 (IGLL…VSAV), 234 to 254 (PTPV…ALIA), 268 to 288 (WGQI…IAGI), 300 to 320 (SSIS…AAGV), 322 to 342 (SMLL…AFIL), 368 to 388 (AFAL…LGFF), 398 to 418 (IGAG…IGAF), and 445 to 465 (FAFL…MAGV).

This sequence belongs to the complex I subunit 2 family. As to quaternary structure, NDH-1 is composed of 14 different subunits. Subunits NuoA, H, J, K, L, M, N constitute the membrane sector of the complex.

The protein resides in the cellular chromatophore membrane. The catalysed reaction is a quinone + NADH + 5 H(+)(in) = a quinol + NAD(+) + 4 H(+)(out). In terms of biological role, NDH-1 shuttles electrons from NADH, via FMN and iron-sulfur (Fe-S) centers, to quinones in the respiratory chain. The immediate electron acceptor for the enzyme in this species is believed to be ubiquinone. Couples the redox reaction to proton translocation (for every two electrons transferred, four hydrogen ions are translocated across the cytoplasmic membrane), and thus conserves the redox energy in a proton gradient. This chain is NADH-quinone oxidoreductase subunit N, found in Rhodobacter capsulatus (Rhodopseudomonas capsulata).